The sequence spans 314 residues: Protoheme IX farnesyltransferase (314 aa).

Helical transmembrane passes span 31 to 51 (VMSLVIFTALVGMAMAPGHFH), 52 to 72 (PVLAITSLLCIAVGAGASGAL), 119 to 139 (ILVNWIAGALLAFTIFFYVVI), 152 to 172 (IVIGGAAGALPPVVAWAAVTG), 179 to 199 (LLLFAIIFFWTPPHFWALALF), 225 to 245 (ILLYTIVLIAVAAAPWALGYF), 247 to 267 (AVYGVVSLILGAGMLVLAINV), and 284 to 304 (FAFSILYLFALFATLLAEVVF).

The protein belongs to the UbiA prenyltransferase family. Protoheme IX farnesyltransferase subfamily.

Its subcellular location is the cell inner membrane. The enzyme catalyses heme b + (2E,6E)-farnesyl diphosphate + H2O = Fe(II)-heme o + diphosphate. The protein operates within porphyrin-containing compound metabolism; heme O biosynthesis; heme O from protoheme: step 1/1. In terms of biological role, converts heme B (protoheme IX) to heme O by substitution of the vinyl group on carbon 2 of heme B porphyrin ring with a hydroxyethyl farnesyl side group. In Bradyrhizobium diazoefficiens (strain JCM 10833 / BCRC 13528 / IAM 13628 / NBRC 14792 / USDA 110), this protein is Protoheme IX farnesyltransferase.